The sequence spans 341 residues: Transmembrane protein 120A-A (341 aa).

The Cytoplasmic segment spans residues 1–131 (MLFNPTGLTE…KQSKFAYKDE (131 aa)). CoA is bound at residue K129. The chain crosses the membrane as a helical span at residues 132 to 151 (YEKFKLYLTVLLLFFSFTCR). Topologically, residues 152-157 (FLVSYR) are extracellular. Residues 158-176 (VVDALFNFLLVWYYCTLTI) traverse the membrane as a helical segment. Topologically, residues 177–189 (RESILINNGSKIK) are cytoplasmic. CoA contacts are provided by S186 and K187. A helical transmembrane segment spans residues 190-208 (GWWVFQHYVSTFLSGVMLT). At 209 to 217 (WPDGELYQM) the chain is on the extracellular side. A helical transmembrane segment spans residues 218-239 (FRNQFLSYSMYINFVQFFQYYY). Residues Q236, Y239, Q240, and H282 each coordinate CoA. Over 240 to 269 (QSGCLYRLRALGERHNMDLTVEGFQSWMWR) the chain is Cytoplasmic. The chain crosses the membrane as a helical span at residues 270-293 (GLTFLLPFLFLGHFFQLYNGITLF). Residues 294 to 303 (QMTQLPEWKE) are Extracellular-facing. A helical transmembrane segment spans residues 304-329 (WQVLMCGSTFLVLFMGNFFTTLGVVY). The Cytoplasmic portion of the chain corresponds to 330–341 (HKYMDQDKAKGL). Position 331 (K331) interacts with CoA.

It belongs to the TMEM120 family. In terms of assembly, homodimer.

The protein localises to the cell membrane. It is found in the nucleus inner membrane. Its subcellular location is the endoplasmic reticulum. In terms of biological role, multifunctional protein involved in mechanosensation, and plays an essential role in lipid metabolism. May function as a potential ion channel involved in sensing mechanical stimuli. TMEM120A is structurally similar to a lipid-modifying enzyme, ELOVL7, and contains a bound coenzyme A molecule, which suggests it might function as an enzyme in lipid metabolism. This is Transmembrane protein 120A-A (tmem120aa) from Danio rerio (Zebrafish).